A 325-amino-acid polypeptide reads, in one-letter code: GMP reductase (325 aa).

Cys173 serves as the catalytic Thioimidate intermediate. NADP(+) is bound at residue 202-225 (IIADGGIRSHGDIAKSVRFGATMV).

The protein belongs to the IMPDH/GMPR family. GuaC type 2 subfamily.

The catalysed reaction is IMP + NH4(+) + NADP(+) = GMP + NADPH + 2 H(+). Catalyzes the irreversible NADPH-dependent deamination of GMP to IMP. It functions in the conversion of nucleobase, nucleoside and nucleotide derivatives of G to A nucleotides, and in maintaining the intracellular balance of A and G nucleotides. The chain is GMP reductase from Acidovorax sp. (strain JS42).